A 157-amino-acid polypeptide reads, in one-letter code: Transcriptional repressor NrdR (157 aa).

A zinc finger lies at 3 to 34; it reads CPHCHQNSSRVIDSRPTDEGRVIRRRRECENC. Positions 49 to 139 constitute an ATP-cone domain; sequence LLVIKKNGTR…VYRQFKDMNV (91 aa).

The protein belongs to the NrdR family. Zn(2+) serves as cofactor.

Its function is as follows. Negatively regulates transcription of bacterial ribonucleotide reductase nrd genes and operons by binding to NrdR-boxes. The chain is Transcriptional repressor NrdR from Latilactobacillus sakei subsp. sakei (strain 23K) (Lactobacillus sakei subsp. sakei).